The following is a 666-amino-acid chain: Probable potassium transport system protein Kup (666 aa).

12 consecutive transmembrane segments (helical) span residues 16–36 (GFIIALGIVYGDIGTSPLYTM), 58–78 (ISLIIWTLTLITTIKYVLVAL), 99–119 (TPWLIVPAVIGGATLLSDGAL), 141–161 (IFQNQSNVIFATLFILLLLFA), 167–187 (TGVIGKLFGPIMFIWFAFLGI), 221–241 (IFILGSIFLATTGAEALYSDL), 253–273 (WPFVKVAIILSYCGQGAWILA), 292–312 (FTMHVVILATLAAIIASQALI), 343–363 (TYIPVINWFLFAITTSIVLLF), 373–393 (YGLAITITMLMTTILLSFFLI), 402–422 (VLLMMIFFGILEGIFFLASAV), and 424–444 (FMHGGYVVVIIAVAIIFIMTI).

This sequence belongs to the HAK/KUP transporter (TC 2.A.72) family.

The protein localises to the cell membrane. It carries out the reaction K(+)(in) + H(+)(in) = K(+)(out) + H(+)(out). Functionally, transport of potassium into the cell. Likely operates as a K(+):H(+) symporter. The sequence is that of Probable potassium transport system protein Kup from Streptococcus agalactiae serotype V (strain ATCC BAA-611 / 2603 V/R).